The following is a 99-amino-acid chain: Aspartyl/glutamyl-tRNA(Asn/Gln) amidotransferase subunit C (99 aa).

Belongs to the GatC family. As to quaternary structure, heterotrimer of A, B and C subunits.

The catalysed reaction is L-glutamyl-tRNA(Gln) + L-glutamine + ATP + H2O = L-glutaminyl-tRNA(Gln) + L-glutamate + ADP + phosphate + H(+). It carries out the reaction L-aspartyl-tRNA(Asn) + L-glutamine + ATP + H2O = L-asparaginyl-tRNA(Asn) + L-glutamate + ADP + phosphate + 2 H(+). Allows the formation of correctly charged Asn-tRNA(Asn) or Gln-tRNA(Gln) through the transamidation of misacylated Asp-tRNA(Asn) or Glu-tRNA(Gln) in organisms which lack either or both of asparaginyl-tRNA or glutaminyl-tRNA synthetases. The reaction takes place in the presence of glutamine and ATP through an activated phospho-Asp-tRNA(Asn) or phospho-Glu-tRNA(Gln). In Orientia tsutsugamushi (strain Ikeda) (Rickettsia tsutsugamushi), this protein is Aspartyl/glutamyl-tRNA(Asn/Gln) amidotransferase subunit C.